The sequence spans 266 residues: Thiazole synthase (266 aa).

Residue K95 is the Schiff-base intermediate with DXP of the active site. 1-deoxy-D-xylulose 5-phosphate-binding positions include G156, 182–183 (AG), and 204–205 (NT).

It belongs to the ThiG family. As to quaternary structure, homotetramer. Forms heterodimers with either ThiH or ThiS.

The protein localises to the cytoplasm. The enzyme catalyses [ThiS sulfur-carrier protein]-C-terminal-Gly-aminoethanethioate + 2-iminoacetate + 1-deoxy-D-xylulose 5-phosphate = [ThiS sulfur-carrier protein]-C-terminal Gly-Gly + 2-[(2R,5Z)-2-carboxy-4-methylthiazol-5(2H)-ylidene]ethyl phosphate + 2 H2O + H(+). The protein operates within cofactor biosynthesis; thiamine diphosphate biosynthesis. In terms of biological role, catalyzes the rearrangement of 1-deoxy-D-xylulose 5-phosphate (DXP) to produce the thiazole phosphate moiety of thiamine. Sulfur is provided by the thiocarboxylate moiety of the carrier protein ThiS. In vitro, sulfur can be provided by H(2)S. This is Thiazole synthase from Shewanella denitrificans (strain OS217 / ATCC BAA-1090 / DSM 15013).